A 292-amino-acid polypeptide reads, in one-letter code: 4-hydroxy-tetrahydrodipicolinate synthase (292 aa).

Thr44 lines the pyruvate pocket. Tyr132 functions as the Proton donor/acceptor in the catalytic mechanism. Lys161 acts as the Schiff-base intermediate with substrate in catalysis. Ile203 serves as a coordination point for pyruvate.

Belongs to the DapA family. Homotetramer; dimer of dimers.

It localises to the cytoplasm. It carries out the reaction L-aspartate 4-semialdehyde + pyruvate = (2S,4S)-4-hydroxy-2,3,4,5-tetrahydrodipicolinate + H2O + H(+). The protein operates within amino-acid biosynthesis; L-lysine biosynthesis via DAP pathway; (S)-tetrahydrodipicolinate from L-aspartate: step 3/4. Functionally, catalyzes the condensation of (S)-aspartate-beta-semialdehyde [(S)-ASA] and pyruvate to 4-hydroxy-tetrahydrodipicolinate (HTPA). The chain is 4-hydroxy-tetrahydrodipicolinate synthase from Fervidobacterium nodosum (strain ATCC 35602 / DSM 5306 / Rt17-B1).